We begin with the raw amino-acid sequence, 191 residues long: Neurotrophic factor BDNF precursor form (191 aa).

A disordered region spans residues 1–23; the sequence is GQGSLAYPGLRTQGNLETLGGPN. The propeptide occupies 1–100; that stretch reads GQGSLAYPGL…AANMSMRVRR (100 aa). N-linked (GlcNAc...) asparagine glycosylation is present at asparagine 93. An intrachain disulfide couples cysteine 113 to cysteine 180.

The protein belongs to the NGF-beta family.

Its subcellular location is the secreted. Promotes the survival of neuronal populations that are all located either in the central nervous system or directly connected to it. The polypeptide is Neurotrophic factor BDNF precursor form (BDNF) (Anilius scytale (Coral cylinder snake)).